Reading from the N-terminus, the 147-residue chain is Hemoglobin subunit epsilon (147 aa).

The 145-residue stretch at 3–147 folds into the Globin domain; it reads HFTAEEKSVI…VATALAHKYH (145 aa). Serine 51 carries the post-translational modification Phosphoserine. Residues histidine 64 and histidine 93 each coordinate heme b.

It belongs to the globin family. As to expression, red blood cells.

Hemoglobin epsilon chain is a beta-type chain found in early embryos. This is Hemoglobin subunit epsilon (HBE1) from Sus scrofa (Pig).